The following is a 425-amino-acid chain: Phosphomethylpyrimidine synthase (425 aa).

Substrate is bound by residues M94, Y123, H162, 184–186 (SRG), 225–228 (NGMR), and E264. Residue H268 coordinates Zn(2+). Y291 contacts substrate. H332 contacts Zn(2+). [4Fe-4S] cluster contacts are provided by C407, C410, and C414.

This sequence belongs to the ThiC family. [4Fe-4S] cluster is required as a cofactor.

It catalyses the reaction 5-amino-1-(5-phospho-beta-D-ribosyl)imidazole + S-adenosyl-L-methionine = 4-amino-2-methyl-5-(phosphooxymethyl)pyrimidine + CO + 5'-deoxyadenosine + formate + L-methionine + 3 H(+). It functions in the pathway cofactor biosynthesis; thiamine diphosphate biosynthesis. Its function is as follows. Catalyzes the synthesis of the hydroxymethylpyrimidine phosphate (HMP-P) moiety of thiamine from aminoimidazole ribotide (AIR) in a radical S-adenosyl-L-methionine (SAM)-dependent reaction. In Methanoregula boonei (strain DSM 21154 / JCM 14090 / 6A8), this protein is Phosphomethylpyrimidine synthase.